The chain runs to 295 residues: Nucleotide-binding protein EF_0766 (295 aa).

Glycine 12–threonine 19 contacts ATP. Position 62–65 (aspartate 62–serine 65) interacts with GTP.

This sequence belongs to the RapZ-like family.

In terms of biological role, displays ATPase and GTPase activities. This Enterococcus faecalis (strain ATCC 700802 / V583) protein is Nucleotide-binding protein EF_0766.